A 362-amino-acid polypeptide reads, in one-letter code: Diphosphomevalonate decarboxylase (362 aa).

(R)-5-diphosphomevalonate is bound by residues 17 to 20 (YWGK), Arg72, 150 to 155 (SGSACR), and Thr206.

It belongs to the diphosphomevalonate decarboxylase family. As to quaternary structure, homodimer.

The catalysed reaction is (R)-5-diphosphomevalonate + ATP = isopentenyl diphosphate + ADP + phosphate + CO2. Its pathway is isoprenoid biosynthesis; isopentenyl diphosphate biosynthesis via mevalonate pathway; isopentenyl diphosphate from (R)-mevalonate: step 3/3. Its function is as follows. Diphosphomevalonate decarboxylase; part of the second module of ergosterol biosynthesis pathway that includes the middle steps of the pathway. MVD1 converts diphosphomevalonate into isopentenyl diphosphate. The second module is carried out in the vacuole and involves the formation of farnesyl diphosphate, which is also an important intermediate in the biosynthesis of ubiquinone, dolichol, heme and prenylated proteins. Activity by the mevalonate kinase ERG12 first converts mevalonate into 5-phosphomevalonate. 5-phosphomevalonate is then further converted to 5-diphosphomevalonate by the phosphomevalonate kinase ERG8. The diphosphomevalonate decarboxylase MVD then produces isopentenyl diphosphate. The isopentenyl-diphosphate delta-isomerase IDI1 then catalyzes the 1,3-allylic rearrangement of the homoallylic substrate isopentenyl (IPP) to its highly electrophilic allylic isomer, dimethylallyl diphosphate (DMAPP). Finally the farnesyl diphosphate synthase ERG20 catalyzes the sequential condensation of isopentenyl pyrophosphate with dimethylallyl pyrophosphate, and then with the resultant geranylpyrophosphate to the ultimate product farnesyl pyrophosphate. The polypeptide is Diphosphomevalonate decarboxylase (Candida albicans (strain SC5314 / ATCC MYA-2876) (Yeast)).